Here is a 66-residue protein sequence, read N- to C-terminus: Protein I177L (66 aa).

N-linked (GlcNAc...) asparagine; by host glycosylation occurs at N11.

It belongs to the asfivirus I177L family.

The protein resides in the virion. The polypeptide is Protein I177L (African swine fever virus (strain Badajoz 1971 Vero-adapted) (Ba71V)).